Consider the following 503-residue polypeptide: Zinc finger and BTB domain-containing protein 37 (503 aa).

Residues 32–96 (CDIVVNVQGQ…CYTGRICLQL (65 aa)) enclose the BTB domain. Disordered stretches follow at residues 140–206 (QTRT…SDVE) and 280–344 (GHGS…QVEE). Basic and acidic residues predominate over residues 144 to 154 (KHQERPPESHR). Polar residues predominate over residues 155 to 167 (VTPNLNRSLSPRH). Over residues 319–336 (TERHRARSESPGRMDEPK) the composition is skewed to basic and acidic residues. 3 consecutive C2H2-type zinc fingers follow at residues 373–395 (LTCI…MRLH), 401–423 (FVCR…IRKH), and 429–452 (FHCH…RKNH). The interval 457 to 503 (PLEGPHSISPETTVTSRGQAEEESPSQEETVAPGEAVQGSVSTTGPD) is disordered. Residues 465 to 474 (SPETTVTSRG) are compositionally biased toward polar residues.

The protein localises to the nucleus. Functionally, may be involved in transcriptional regulation. The chain is Zinc finger and BTB domain-containing protein 37 (ZBTB37) from Homo sapiens (Human).